We begin with the raw amino-acid sequence, 307 residues long: Nicotinamide/nicotinic acid mononucleotide adenylyltransferase 2 (307 aa).

Residues Ser16 and Phe17 each coordinate NAD(+). His24 lines the ATP pocket. 7 residues coordinate NAD(+): Trp92, Thr95, Gly200, Asp202, Leu212, Trp213, and Arg232. ATP is bound at residue 271–274 (TKSR).

This sequence belongs to the eukaryotic NMN adenylyltransferase family. Monomer. It depends on Mg(2+) as a cofactor.

The protein resides in the golgi apparatus membrane. Its subcellular location is the cytoplasmic vesicle membrane. It is found in the cytoplasm. It localises to the cell projection. The protein localises to the axon. The enzyme catalyses beta-nicotinamide D-ribonucleotide + ATP + H(+) = diphosphate + NAD(+). It carries out the reaction nicotinate beta-D-ribonucleotide + ATP + H(+) = deamido-NAD(+) + diphosphate. Its pathway is cofactor biosynthesis; NAD(+) biosynthesis; NAD(+) from nicotinamide D-ribonucleotide: step 1/1. It participates in cofactor biosynthesis; NAD(+) biosynthesis; deamido-NAD(+) from nicotinate D-ribonucleotide: step 1/1. Its function is as follows. Nicotinamide/nicotinate-nucleotide adenylyltransferase that acts as an axon maintenance factor. Axon survival factor required for the maintenance of healthy axons: acts by delaying Wallerian axon degeneration, an evolutionarily conserved process that drives the loss of damaged axons. Catalyzes the formation of NAD(+) from nicotinamide mononucleotide (NMN) and ATP. Can also use the deamidated form; nicotinic acid mononucleotide (NaMN) as substrate but with a lower efficiency. Also catalyzes the reverse reaction, i.e. the pyrophosphorolytic cleavage of NAD(+). For the pyrophosphorolytic activity prefers NAD(+), NADH and NaAD as substrates and degrades nicotinic acid adenine dinucleotide phosphate (NHD) less effectively. Also acts as an activator of ADP-ribosylation by supporting the catalytic activity of PARP16 and promoting mono-ADP-ribosylation of ribosomes by PARP16. May be involved in the maintenance of axonal integrity. The chain is Nicotinamide/nicotinic acid mononucleotide adenylyltransferase 2 (nmnat2) from Xenopus tropicalis (Western clawed frog).